Reading from the N-terminus, the 260-residue chain is PHD finger protein ALFIN-LIKE 5 (260 aa).

M1 carries the post-translational modification N-acetylmethionine. Positions 142–203 (AEKQTKEMPS…EEDEDEDEHG (62 aa)) are disordered. The segment covering 148–165 (EMPSSANQNGNRSKSNSK) has biased composition (polar residues). Residues 167 to 181 (RGLESKSSKTIHAKD) show a composition bias toward basic and acidic residues. A compositionally biased stretch (acidic residues) spans 182–202 (EEEGLELEEGEEEEDEDEDEH). The PHD-type zinc-finger motif lies at 204 to 256 (ETLCGACGDNYASDEFWICCDMCEKWFHGECVKITPARAEHIKHYKCPTCSNK).

The protein belongs to the Alfin family. In terms of assembly, interacts with H3K4me3 and to a lesser extent with H3K4me2. Ubiquitously expressed.

The protein resides in the nucleus. In terms of biological role, histone-binding component that specifically recognizes H3 tails trimethylated on 'Lys-4' (H3K4me3), which mark transcription start sites of virtually all active genes. In Arabidopsis thaliana (Mouse-ear cress), this protein is PHD finger protein ALFIN-LIKE 5 (AL5).